The primary structure comprises 91 residues: Alpha-defensin 31 (91 aa).

A signal peptide spans 1 to 19; that stretch reads MKKLVLLFALVLLAFQVQA. A propeptide spanning residues 20–65 is cleaved from the precursor; the sequence is DSIQNTDEETKTEEQQGEEDQAVSVSFGDPQGSGLQDAALGWGRRC. Positions 22 to 55 are disordered; it reads IQNTDEETKTEEQQGEEDQAVSVSFGDPQGSGLQ. Tandem repeats lie at residues 65 to 67, 68 to 70, 71 to 73, 77 to 79, 80 to 82, and 83 to 85. The 6 X 3 AA tandem repeats of C-P-X stretch occupies residues 65–85; sequence CPRCPPCPRCSWCPRCPTCPR.

Belongs to the alpha-defensin family. Paneth cells of the small bowel.

It is found in the secreted. In terms of biological role, apparent precursor of a secreted, cationic, proline- and cysteine-rich peptide that contains Cys-Pro-Xaa repeats. Unlike cryptdin, the proposed mature peptide region lacks the structural motif characteristic of defensins. It may have microbicidal activities. In Mus musculus (Mouse), this protein is Alpha-defensin 31.